A 499-amino-acid chain; its full sequence is Aspartyl/glutamyl-tRNA(Asn/Gln) amidotransferase subunit B (499 aa).

This sequence belongs to the GatB/GatE family. GatB subfamily. Heterotrimer of A, B and C subunits.

It carries out the reaction L-glutamyl-tRNA(Gln) + L-glutamine + ATP + H2O = L-glutaminyl-tRNA(Gln) + L-glutamate + ADP + phosphate + H(+). The enzyme catalyses L-aspartyl-tRNA(Asn) + L-glutamine + ATP + H2O = L-asparaginyl-tRNA(Asn) + L-glutamate + ADP + phosphate + 2 H(+). Its function is as follows. Allows the formation of correctly charged Asn-tRNA(Asn) or Gln-tRNA(Gln) through the transamidation of misacylated Asp-tRNA(Asn) or Glu-tRNA(Gln) in organisms which lack either or both of asparaginyl-tRNA or glutaminyl-tRNA synthetases. The reaction takes place in the presence of glutamine and ATP through an activated phospho-Asp-tRNA(Asn) or phospho-Glu-tRNA(Gln). In Salinispora tropica (strain ATCC BAA-916 / DSM 44818 / JCM 13857 / NBRC 105044 / CNB-440), this protein is Aspartyl/glutamyl-tRNA(Asn/Gln) amidotransferase subunit B.